A 155-amino-acid chain; its full sequence is Pathogenesis-related protein STH-21 (155 aa).

Belongs to the BetVI family.

The protein is Pathogenesis-related protein STH-21 (STH-21) of Solanum tuberosum (Potato).